We begin with the raw amino-acid sequence, 251 residues long: MSDYVYNLVKKHHSVRKFKNKPLSEDVVKKLVEAGQSASTSSFLQAYSIIGIDDEKIKENLREVSGQPYVVENGYLFIFVIDYYRHHLVDQHAETDMENAYGSTEGLLVGAIDAALVAENIAVTAEDMGYGIVFLGSLRNDVERVREILDLPDYVFPVFGMAVGEPADDENGAAKPRLPFDHVFHHNKYHADKETQYAQMADYDQTISEYYDQRTNGNRKETWSQQIEMFLGNKARLDMLEQLQKSGLIQR.

The protein belongs to the flavin oxidoreductase frp family. Requires FMN as cofactor.

Its function is as follows. Reduces FMN, organic nitro compounds and disulfide DTNB. Involved in maintenance of the cellular redox state and the disulfide stress response. The protein is NADPH-dependent oxidoreductase (nfrA) of Staphylococcus aureus (strain bovine RF122 / ET3-1).